A 214-amino-acid polypeptide reads, in one-letter code: Ribonuclease HII (214 aa).

The region spanning 26 to 214 (EIVCGVDEAG…PVREAFDLIR (189 aa)) is the RNase H type-2 domain. A divalent metal cation-binding residues include Asp-32, Glu-33, and Asp-124.

Belongs to the RNase HII family. It depends on Mn(2+) as a cofactor. Mg(2+) is required as a cofactor.

It is found in the cytoplasm. The catalysed reaction is Endonucleolytic cleavage to 5'-phosphomonoester.. Its function is as follows. Endonuclease that specifically degrades the RNA of RNA-DNA hybrids. The polypeptide is Ribonuclease HII (Burkholderia mallei (strain NCTC 10247)).